Here is a 357-residue protein sequence, read N- to C-terminus: MASLTDLVNLDLSDCTDKIIAEYIWVGGSGIDLRSKARTVKGPITDPSQLPKWNYDGSSTGQAPGEDSEVILYPQAIFKDPFRKGNNILVMCDCYTPQGEPIPSNKRYKAATVFSHPDVAAEVPWYGIEQEYTLLQKDLSWPLGWPVGGYPGPQGPYYCAAGADKAFGRDVVDAHYKACLYAGINISGINGEVMPGQWEFQVGPSVGISAGDEIWVARYILERITEMAGIVLSLDPKPIKGDWNGAGAHTNYSTKSMREAGGYEVIKEAIEKLGRRHREHIAAYGEGNERRLTGRHETADINTFKWGVANRGASIRVGRDTEKEGKGYFEDRRPASNMDPYVVTGMIADTTILWKGN.

One can recognise a GS beta-grasp domain in the interval 19–99; the sequence is IIAEYIWVGG…VMCDCYTPQG (81 aa). The 252-residue stretch at 106-357 folds into the GS catalytic domain; the sequence is KRYKAATVFS…ADTTILWKGN (252 aa).

The protein belongs to the glutamine synthetase family. Homooctamer. In terms of tissue distribution, found mainly in the cortical tissues of seedling roots, stem and seedling shoot.

The protein localises to the cytoplasm. It carries out the reaction L-glutamate + NH4(+) + ATP = L-glutamine + ADP + phosphate + H(+). Its function is as follows. Plays a role in the flow of nitrogen into nitrogenous organic compounds. The sequence is that of Glutamine synthetase root isozyme 5 (GS1-5) from Zea mays (Maize).